Reading from the N-terminus, the 289-residue chain is Phosphatidylglycerol--prolipoprotein diacylglyceryl transferase (289 aa).

A run of 7 helical transmembrane segments spans residues 23–43 (ALHW…WLAV), 61–81 (LLYM…VLFY), 99–119 (GGMS…WFAH), 125–145 (FFQV…AGRL), 199–219 (SQLY…NLFI), 226–246 (GSVS…TEFF), and 259–279 (LFSM…LMMV). A 1,2-diacyl-sn-glycero-3-phospho-(1'-sn-glycerol) is bound at residue Arg-144.

The protein belongs to the Lgt family.

It localises to the cell inner membrane. It catalyses the reaction L-cysteinyl-[prolipoprotein] + a 1,2-diacyl-sn-glycero-3-phospho-(1'-sn-glycerol) = an S-1,2-diacyl-sn-glyceryl-L-cysteinyl-[prolipoprotein] + sn-glycerol 1-phosphate + H(+). It functions in the pathway protein modification; lipoprotein biosynthesis (diacylglyceryl transfer). Its function is as follows. Catalyzes the transfer of the diacylglyceryl group from phosphatidylglycerol to the sulfhydryl group of the N-terminal cysteine of a prolipoprotein, the first step in the formation of mature lipoproteins. In Pectobacterium atrosepticum (strain SCRI 1043 / ATCC BAA-672) (Erwinia carotovora subsp. atroseptica), this protein is Phosphatidylglycerol--prolipoprotein diacylglyceryl transferase.